The following is a 438-amino-acid chain: ATP-dependent RNA helicase RhlB (438 aa).

The short motif at 9 to 37 is the Q motif element; that stretch reads QRFADLPLHPEVKQALAENGFEFCTPIQA. Positions 40–219 constitute a Helicase ATP-binding domain; it reads LPVLLQSKDI…YDHMNEPVKV (180 aa). 53 to 60 provides a ligand contact to ATP; it reads AQTGTGKT. The DEAD box signature appears at 165-168; sequence DEAD. The Helicase C-terminal domain maps to 243 to 390; it reads KMRLLLTLIE…VSNYDSEALL (148 aa). Positions 395–438 are disordered; sequence TPAKIHRKHPSGTRNLRDRSGTSRPGAQRSGARPPRHDRTRRHS. Basic residues predominate over residues 428 to 438; sequence PPRHDRTRRHS.

The protein belongs to the DEAD box helicase family. RhlB subfamily. As to quaternary structure, component of the RNA degradosome, which is a multiprotein complex involved in RNA processing and mRNA degradation.

It localises to the cytoplasm. It carries out the reaction ATP + H2O = ADP + phosphate + H(+). Its function is as follows. DEAD-box RNA helicase involved in RNA degradation. Has RNA-dependent ATPase activity and unwinds double-stranded RNA. The sequence is that of ATP-dependent RNA helicase RhlB from Shewanella baltica (strain OS223).